A 202-amino-acid polypeptide reads, in one-letter code: Potassium-transporting ATPase KdpC subunit 1 (202 aa).

The chain crosses the membrane as a helical span at residues 17-37; the sequence is LWVIAAVIYPFFMIAVGQIVF.

It belongs to the KdpC family. As to quaternary structure, the system is composed of three essential subunits: KdpA, KdpB and KdpC.

It is found in the cell inner membrane. Functionally, part of the high-affinity ATP-driven potassium transport (or Kdp) system, which catalyzes the hydrolysis of ATP coupled with the electrogenic transport of potassium into the cytoplasm. This subunit acts as a catalytic chaperone that increases the ATP-binding affinity of the ATP-hydrolyzing subunit KdpB by the formation of a transient KdpB/KdpC/ATP ternary complex. This chain is Potassium-transporting ATPase KdpC subunit 1, found in Nostoc sp. (strain PCC 7120 / SAG 25.82 / UTEX 2576).